The sequence spans 125 residues: Holo-[acyl-carrier-protein] synthase (125 aa).

The Mg(2+) site is built by D8 and E57.

This sequence belongs to the P-Pant transferase superfamily. AcpS family. The cofactor is Mg(2+).

Its subcellular location is the cytoplasm. It catalyses the reaction apo-[ACP] + CoA = holo-[ACP] + adenosine 3',5'-bisphosphate + H(+). In terms of biological role, transfers the 4'-phosphopantetheine moiety from coenzyme A to a Ser of acyl-carrier-protein. This Neisseria meningitidis serogroup C (strain 053442) protein is Holo-[acyl-carrier-protein] synthase.